A 408-amino-acid chain; its full sequence is Sprouty-related, EVH1 domain-containing protein 3 (408 aa).

Residues 1-113 enclose the WH1 domain; that stretch reads MVRVRAVVMA…KSLLAALAAL (113 aa). The interval 118 to 226 is disordered; the sequence is LTPSSSSSSS…YEDYRRSGPP (109 aa). Residues 120-130 are compositionally biased toward low complexity; the sequence is PSSSSSSSSPS. In terms of domain architecture, KBD spans 192–242; it reads LPFTGIPEPSESLAGAGSQGWGSRGYEDYRRSGPPPPPLALSTCVVRFAKT. Asymmetric dimethylarginine is present on arginine 238. Omega-N-methylarginine is present on arginine 246. Positions 256 to 286 are disordered; it reads LPAPLTEAAPPAPPARPPPGPGPTPAPAKAS. Residues 265–281 show a composition bias toward pro residues; the sequence is PPAPPARPPPGPGPTPA. In terms of domain architecture, SPR spans 294 to 405; that stretch reads RCVHCRALFR…CAGCGGRHEE (112 aa).

In terms of assembly, interacts with palmitoyltransferase ZDHHC17/HIP14; the interaction leads to palmitoylation of SPRED3. Phosphorylated on tyrosine. Post-translationally, palmitoylated by ZDHHC17/HIP14. In terms of processing, ubiquitinated. As to expression, brain specific.

It is found in the cell membrane. Its function is as follows. Tyrosine kinase substrate that inhibits growth-factor-mediated activation of MAP kinase. Inhibits fibroblast growth factor (FGF)-induced retinal lens fiber differentiation, probably by inhibiting FGF-mediated phosphorylation of ERK1/2. Inhibits TGFB-induced epithelial-to-mesenchymal transition in lens epithelial cells. This is Sprouty-related, EVH1 domain-containing protein 3 (Spred3) from Mus musculus (Mouse).